We begin with the raw amino-acid sequence, 100 residues long: Large ribosomal subunit protein bL28 (100 aa).

It belongs to the bacterial ribosomal protein bL28 family.

The sequence is that of Large ribosomal subunit protein bL28 from Ehrlichia chaffeensis (strain ATCC CRL-10679 / Arkansas).